The sequence spans 193 residues: MLGSRAVMLMLLLLLLPWTSQGRAVPEGSSPAWAQGQQLSQQLCTLAWTAHLPMGHVDLPREEGDDETTSEVPHIQCGDGCDPQGLRDNSQSCLQRIHQGLVFYEKLLGSDIFTGEPSLHPDGSVGQLHASLLGLRQLLQPEGHHWETEQTPSPSPSQPWQRLLLRLKILRSLQAFVAVAARVFAHGAATLSQ.

Positions 1–22 (MLGSRAVMLMLLLLLLPWTSQG) are cleaved as a signal peptide.

It belongs to the IL-6 superfamily. In terms of assembly, heterodimer with IL12B; disulfide-linked. The heterodimer is known as interleukin IL-23. Interacts with IL23R; this interaction enables recruitment of IL12RB1.

It localises to the secreted. In terms of biological role, associates with IL12B to form the pro-inflammatory cytokine IL-23 that plays different roles in innate and adaptive immunity. Released by antigen-presenting cells such as dendritic cells or macrophages, binds to a heterodimeric receptor complex composed of IL12RB1 and IL23R to activate JAK2 and TYK2 which then phosphorylate the receptor to form a docking site leading to the phosphorylation of STAT3 and STAT4. This process leads to activation of several pathways including p38 MAPK or NF-kappa-B and promotes the production of pro-inflammatory cytokines such as interleukin-17A/IL17A. In turn, participates in the early and effective intracellular bacterial clearance. Promotes the expansion and survival of T-helper 17 cells, a CD4-positive helper T-cell subset that produces IL-17, as well as other IL-17-producing cells. The sequence is that of Interleukin-23 subunit alpha (IL23A) from Sus scrofa (Pig).